A 949-amino-acid polypeptide reads, in one-letter code: L-fucokinase/L-fucose-1-P guanylyltransferase (949 aa).

The fucose-1-phosphate guanylyltransferase stretch occupies residues 25–191 (DWFCTSDPVG…DFMLQKPSLA (167 aa)). The segment at 559–949 (LLRDGLLDGI…SDKGFQVSRS (391 aa)) is L-fucokinase.

It belongs to the GHMP kinase family. As to quaternary structure, homotetramer. Requires Mn(2+) as cofactor. Mg(2+) is required as a cofactor.

The enzyme catalyses L-fucose + ATP = beta-L-fucose 1-phosphate + ADP + H(+). It catalyses the reaction beta-L-fucose 1-phosphate + GTP + H(+) = GDP-beta-L-fucose + diphosphate. Its function is as follows. Bifunctional enzyme involved in the salvage pathway of GDP-fucose synthesis. Catalyzes two successive reactions, the ATP-dependent phosphorylation of L-fucose to L-fucose 1-phosphate, and its guanylylation to GDP-L-fucose. GDP-fucose is an important fucose donor in the process of fucosylated oligosaccharides formation. This Bacteroides fragilis protein is L-fucokinase/L-fucose-1-P guanylyltransferase.